The sequence spans 342 residues: Probable dual-specificity RNA methyltransferase RlmN (342 aa).

The active-site Proton acceptor is the glutamate 91. Positions 97 to 327 constitute a Radical SAM core domain; it reads YKHGNSICVS…TTIRREMGAD (231 aa). A disulfide bridge links cysteine 104 with cysteine 332. The [4Fe-4S] cluster site is built by cysteine 111, cysteine 115, and cysteine 118. Residues 158 to 159, serine 190, 213 to 215, and asparagine 289 each bind S-adenosyl-L-methionine; these read GE and SLH. Cysteine 332 functions as the S-methylcysteine intermediate in the catalytic mechanism.

It belongs to the radical SAM superfamily. RlmN family. The cofactor is [4Fe-4S] cluster.

The protein localises to the cytoplasm. It carries out the reaction adenosine(2503) in 23S rRNA + 2 reduced [2Fe-2S]-[ferredoxin] + 2 S-adenosyl-L-methionine = 2-methyladenosine(2503) in 23S rRNA + 5'-deoxyadenosine + L-methionine + 2 oxidized [2Fe-2S]-[ferredoxin] + S-adenosyl-L-homocysteine. The enzyme catalyses adenosine(37) in tRNA + 2 reduced [2Fe-2S]-[ferredoxin] + 2 S-adenosyl-L-methionine = 2-methyladenosine(37) in tRNA + 5'-deoxyadenosine + L-methionine + 2 oxidized [2Fe-2S]-[ferredoxin] + S-adenosyl-L-homocysteine. In terms of biological role, specifically methylates position 2 of adenine 2503 in 23S rRNA and position 2 of adenine 37 in tRNAs. The chain is Probable dual-specificity RNA methyltransferase RlmN from Clostridium botulinum (strain Loch Maree / Type A3).